The primary structure comprises 320 residues: tRNA-cytidine(32) 2-sulfurtransferase (320 aa).

The PP-loop motif motif lies at 54-59; the sequence is SGGKDS. The [4Fe-4S] cluster site is built by cysteine 129, cysteine 132, and cysteine 220.

This sequence belongs to the TtcA family. As to quaternary structure, homodimer. It depends on Mg(2+) as a cofactor. The cofactor is [4Fe-4S] cluster.

It localises to the cytoplasm. It catalyses the reaction cytidine(32) in tRNA + S-sulfanyl-L-cysteinyl-[cysteine desulfurase] + AH2 + ATP = 2-thiocytidine(32) in tRNA + L-cysteinyl-[cysteine desulfurase] + A + AMP + diphosphate + H(+). It functions in the pathway tRNA modification. Its function is as follows. Catalyzes the ATP-dependent 2-thiolation of cytidine in position 32 of tRNA, to form 2-thiocytidine (s(2)C32). The sulfur atoms are provided by the cysteine/cysteine desulfurase (IscS) system. The polypeptide is tRNA-cytidine(32) 2-sulfurtransferase (Bordetella parapertussis (strain 12822 / ATCC BAA-587 / NCTC 13253)).